A 473-amino-acid chain; its full sequence is Trehalose-6-phosphate synthase (473 aa).

Arg10 is a D-glucose 6-phosphate binding site. A UDP-alpha-D-glucose-binding site is contributed by 21 to 22 (GG). Tyr76 and Asp130 together coordinate D-glucose 6-phosphate. Residues Arg262 and Lys267 each contribute to the UDP-alpha-D-glucose site. Arg300 is a D-glucose 6-phosphate binding site. UDP-alpha-D-glucose is bound by residues Phe339 and 365–369 (LVAKE).

This sequence belongs to the glycosyltransferase 20 family. In terms of assembly, homotetramer.

The catalysed reaction is D-glucose 6-phosphate + UDP-alpha-D-glucose = alpha,alpha-trehalose 6-phosphate + UDP + H(+). It functions in the pathway glycan biosynthesis; trehalose biosynthesis. Probably involved in the osmoprotection via the biosynthesis of trehalose. Catalyzes the transfer of glucose from UDP-alpha-D-glucose (UDP-Glc) to D-glucose 6-phosphate (Glc-6-P) to form trehalose-6-phosphate. Acts with retention of the anomeric configuration of the UDP-sugar donor. This Citrobacter koseri (strain ATCC BAA-895 / CDC 4225-83 / SGSC4696) protein is Trehalose-6-phosphate synthase.